Consider the following 517-residue polypeptide: MTTFRPLSSFEKKILTQSLNDQRNGTIFSSTYSKSLSRENDADWHSDEVTLGTNSSKDDSRLTLPLIATTLKRLIKSQPALFATVNEEWEFEPLKQLKTSDIVNVIEFETIKDKEVNCHWGVPPPYLLRHAFNKTRFVPGSNKPLWTLYVIDEALLVFHGHDVLFDIFSAANFHKLFLKELNEISTVTHSEDRILFDVNDINLSELKFPKSIYDSAKLHLPAMTPQIFHKQTQSFFKSIYYNTLKRPFGYLTNQTSLSSSVSATQLKKYNDILNAHTSLCGTTVFGIVNNQRFNYLKSIVNQEHICLRSFICGIAMICLKPLVKDFSGTIVFTIPINLRNHLGLGGSLGLFFKELRVECPLSLIDDELSANEFLTNSNDNEDNDDEFNERLMEYQFNKVTKHVSGFIMAKLRSWEKNGFNDDDIRRMKYDNDDDFHIQNSRTKLIQINDVSDISLSMNGDDKSFKIVSTGFTSSINRPTLMSLSYTYCEEMGLNICIHYPDSYNLESFVECFESFIE.

As to quaternary structure, interacts with PDR17/PSTB2 and SCS2.

Its function is as follows. Phosphatidic acid-binding protein involved in interorganelle phosphatidylserine (PtdSer) transport. Linkks a PtdSer donor membrane (via binding of SCS2 and phosphatidic acid present in the donor membrane) with an acceptor membrane (via its interaction with PDR17), forming a zone of apposition that facilitates PtdSer transfer. The polypeptide is PSTB2-interacting protein 1 (Saccharomyces cerevisiae (strain ATCC 204508 / S288c) (Baker's yeast)).